The chain runs to 277 residues: Basic leucine zipper 9 (277 aa).

Residues 73-141 (ADSPVSANKP…ESAKRSRRRK (69 aa)) form a disordered region. At Ser-100 the chain carries Phosphoserine. A compositionally biased stretch (polar residues) spans 109–118 (AGQSEMTNDP). In terms of domain architecture, bZIP spans 120–183 (DLKRIRRMNS…RSAGTNNRVL (64 aa)). The interval 122–141 (KRIRRMNSNRESAKRSRRRK) is basic motif. The Nuclear localization signal motif lies at 124 to 131 (IRRMNSNR). The leucine-zipper stretch occupies residues 148–162 (LETQVDSLKGDNSTL).

This sequence belongs to the bZIP family. In terms of assembly, homodimer. Interacts with BZIP1, BZIP2, BZIP10, BZIP11, BZIP25, BZIP44, BZIP53 and BZIP63. Phosphorylated. In terms of tissue distribution, expressed in roots, shoots, stems, young leaves, and flowers, mostly in vascular tissues (e.g. phloem).

It localises to the nucleus. Functionally, transcription factor. This chain is Basic leucine zipper 9 (BZIP9), found in Arabidopsis thaliana (Mouse-ear cress).